A 310-amino-acid polypeptide reads, in one-letter code: tRNA pseudouridine synthase B (310 aa).

Aspartate 49 (nucleophile) is an active-site residue.

It belongs to the pseudouridine synthase TruB family. Type 1 subfamily.

The enzyme catalyses uridine(55) in tRNA = pseudouridine(55) in tRNA. Functionally, responsible for synthesis of pseudouridine from uracil-55 in the psi GC loop of transfer RNAs. The protein is tRNA pseudouridine synthase B of Rhizobium etli (strain ATCC 51251 / DSM 11541 / JCM 21823 / NBRC 15573 / CFN 42).